Consider the following 151-residue polypeptide: Myosin light polypeptide 6 (151 aa).

Residue Cys2 is modified to N-acetylcysteine. Positions 7-42 constitute an EF-hand 1 domain; sequence DQTAEFKEAFQLFDRTGDGKILYSQCGDVMRALGQN. Position 57 is a phosphoserine (Ser57). Lys81 is modified (N6-acetyllysine). The EF-hand 2 domain occupies 84 to 119; that stretch reads GTYEDYVEGLRVFDKEGNGTVMGAEIRHVLVTLGEK.

Myosin is a hexamer of 2 heavy chains and 4 light chains. Interacts with SPATA6.

Its function is as follows. Regulatory light chain of myosin. Does not bind calcium. The protein is Myosin light polypeptide 6 (MYL6) of Bos taurus (Bovine).